Here is a 513-residue protein sequence, read N- to C-terminus: Maturase K (513 aa).

Belongs to the intron maturase 2 family. MatK subfamily.

It localises to the plastid. The protein resides in the chloroplast. Its function is as follows. Usually encoded in the trnK tRNA gene intron. Probably assists in splicing its own and other chloroplast group II introns. The sequence is that of Maturase K from Pinus parviflora (Japanese white pine).